The chain runs to 1471 residues: MALNSTDNRWSTGEDTPSEAQLPDGEERLDAAPDEKVTAEDIDRRLTNLVRKISAQSRRSHHSFLFGAGENSSLNPQSPSFDARKWARAFYNARYRQDDGHPPRVVGVAFKNLNVFGYGSPVDYQMSVGNALLKVPTMVRQALGGGKQRVDILHDVEGLVLPGEQLCVLGPPGSGCSTFLRTIAGETHGLNVDAASYINYHGISPKQMSTAFRGEAIYTAEVDAHFPMLSVGDTLYFAALARAPQVIPGGLSRQEYAKHLRDVIMAMFGIGHTINTRVGNDFVRGVSGGERKRVTIAEAALGYSPLQCWDNSTRGLDSANAVEFCRTLRTQSDVFGITSCVAIYQAPQAAYDLFDKVLVLYEGWQIYFGAAHEAQAYFEQLGFQCPESQTTADFLTSMCSPAERIVKPGFEHMAPRTPEEFAQRWKESPQRQSLLHAIEKYSTEHPLDGPDLHQFALSRRAEKSHRQREKSPYTLSYRGQVKLCLWREWQRLKNDPSVTLAMLIGNFFEALIIASIFYNLTGDTSSFYYRGALLFMMVLLNAFASVLEILTLYEKRTIVEKQSRYAYYHPSAEALSSFIMSLPYKFVNSSLVNLTLYFMSNLRREPGPFFFFLLISTSMMLAMSMFFRWFASLTKTIDQALAPSSIILLALVLYTGFTIPVSYMRGWASWIRWLNPVSYGFEAVMINEFHGREFPCSSFVPSGPGYEDVSRTQRVCSTVGATSGSDVVSGDVFVRSSYGYVNSHRWRNFGIIIAMTVFLAVCHFVTTELVASKRSKGEVLVFRRGSAHIARAKQGQRDEEQPSASAVPSEKYSEAPTPVEGVETQTSIFHWEDVCYDVKIKNETRRILDHVDGWIKPGTLTALMGVSGAGKTTLLDVLASRTTVGVVTGETLVDGRQRDSSFQRKTGYVQQQDLHLATTTVREALEFSALLRQPPQYSREEKLEYVEKVIDLLHMRDYADAIVGVPGEGLNVERRKRLTIGVELAARPKLLLFLDEPTSGLDSQTSWSICNLMETLTRNGQAILCTIHQPSAMLFQRFDRLLLLAKGGKTVYFGEIGSGARTLMDYFVRNGGPPCPKGANPAEHMLEVIGAAPGAHTDIDWPAVWRNSPEYQQVRQELSRLRQLASQPSSVHSDDPSSYSEFAAPFPAQLGQVGRRVFQQYWRTPSYLYSKAILTVGSSIFIGFSFFKGDNTAQGLQNQVFGVFVFLFVVIQLIFQIIPTFVTQRTLYESRERQSKTYSWQAFVLSNIAVEFAWNTIAAVLCFLAWFYPVGLYRNAEYTDSVHSRSTLVFLIIWATFLFASSFAHLLIAGVESAELASALANIMGIMMYAFCGILAGPHALPGFWIFMYRVNPFTYLVSGLLSASLGDAPMHCAANEFLAFSPPANRTCGEYMEDYMALAGGYLLDSAARGDEQCQYCRVDNTSQYLRNFSIDFATRWRDFGLLWVYVAVNTFGAVFLYWLCRVPKGKKRL.

Positions 1–19 (MALNSTDNRWSTGEDTPSE) are enriched in polar residues. The tract at residues 1-40 (MALNSTDNRWSTGEDTPSEAQLPDGEERLDAAPDEKVTAE) is disordered. Residue N4 is glycosylated (N-linked (GlcNAc...) asparagine). Residues 25-40 (GEERLDAAPDEKVTAE) show a composition bias toward basic and acidic residues. 2 N-linked (GlcNAc...) asparagine glycosylation sites follow: N71 and N311. The ABC transporter 1 domain maps to 133-387 (LKVPTMVRQA…FEQLGFQCPE (255 aa)). Residues 498–518 (VTLAMLIGNFFEALIIASIFY) traverse the membrane as a helical segment. The N-linked (GlcNAc...) asparagine glycan is linked to N519. The next 5 helical transmembrane spans lie at 532-552 (ALLFMMVLLNAFASVLEILTL), 578-598 (FIMSLPYKFVNSSLVNLTLYF), 607-627 (GPFFFFLLISTSMMLAMSMFF), 641-661 (LAPSSIILLALVLYTGFTIPV), and 751-771 (IIIAMTVFLAVCHFVTTELVA). The segment at 791-819 (RAKQGQRDEEQPSASAVPSEKYSEAPTPV) is disordered. Positions 829 to 1071 (FHWEDVCYDV…TLMDYFVRNG (243 aa)) constitute an ABC transporter 2 domain. An N-linked (GlcNAc...) asparagine glycan is attached at N842. Position 865–872 (865–872 (GVSGAGKT)) interacts with ATP. The next 5 helical transmembrane spans lie at 1167 to 1187 (YLYSKAILTVGSSIFIGFSFF), 1201 to 1221 (FGVFVFLFVVIQLIFQIIPTF), 1252 to 1272 (FAWNTIAAVLCFLAWFYPVGL), 1288 to 1308 (LVFLIIWATFLFASSFAHLLI), and 1326 to 1346 (IMMYAFCGILAGPHALPGFWI). N-linked (GlcNAc...) asparagine glycosylation is found at N1386, N1422, and N1429. The helical transmembrane segment at 1441–1461 (FGLLWVYVAVNTFGAVFLYWL) threads the bilayer.

Belongs to the ABC transporter superfamily. ABCG family. PDR (TC 3.A.1.205) subfamily.

The protein resides in the cell membrane. The enzyme catalyses fluconazole(in) + ATP + H2O = fluconazole(out) + ADP + phosphate + H(+). The catalysed reaction is itraconazole(in) + ATP + H2O = itraconazole(out) + ADP + phosphate + H(+). Its activity is regulated as follows. The efflux inhibitor FK506 impairs the transport activity. Pleiotropic ABC efflux transporter that shows a strong substrate specificity for the azole class of drugs such as lotrimazole (CLT), fluconazole (FLC), itraconazole (ITC), ketoconazole (KTC), posaconazole (POS), econazole (ECON), metconazole (MET), miconazole (MCZ), prochloraz (PCLZ), and tebuconazole (TEBZ). The protein is ABC multidrug transporter F of Aspergillus fumigatus (strain ATCC MYA-4609 / CBS 101355 / FGSC A1100 / Af293) (Neosartorya fumigata).